We begin with the raw amino-acid sequence, 159 residues long: Transcriptional repressor NrdR (159 aa).

A zinc finger spans residues 3–34 (CPTCQNTDSRVLESRSADTGKSVRRRRECLNC). The 91-residue stretch at 49–139 (ISVLKKDGSR…VYRKFNGVKD (91 aa)) folds into the ATP-cone domain.

The protein belongs to the NrdR family. Zn(2+) serves as cofactor.

Its function is as follows. Negatively regulates transcription of bacterial ribonucleotide reductase nrd genes and operons by binding to NrdR-boxes. The chain is Transcriptional repressor NrdR from Prochlorococcus marinus (strain MIT 9515).